The chain runs to 379 residues: uncharacterized protein (379 aa).

The helical transmembrane segment at 7 to 27 threads the bilayer; it reads VYIFAGIFLFIALIILIKIFF.

Its subcellular location is the membrane. This is an uncharacterized protein from Caenorhabditis elegans.